The chain runs to 147 residues: Small ribosomal subunit protein uS5 (147 aa).

Residues 9–72 (FEEVIVDIGR…DDAFKNIVEV (64 aa)) form the S5 DRBM domain.

It belongs to the universal ribosomal protein uS5 family. In terms of assembly, part of the 30S ribosomal subunit. Contacts proteins S4 and S8.

Its function is as follows. With S4 and S12 plays an important role in translational accuracy. Functionally, located at the back of the 30S subunit body where it stabilizes the conformation of the head with respect to the body. In Campylobacter jejuni subsp. jejuni serotype O:6 (strain 81116 / NCTC 11828), this protein is Small ribosomal subunit protein uS5.